The following is a 434-amino-acid chain: Flagellum-specific ATP synthase (434 aa).

164-171 (AGSGVGKS) provides a ligand contact to ATP.

This sequence belongs to the ATPase alpha/beta chains family.

It localises to the cytoplasm. It catalyses the reaction ATP + H2O + 4 H(+)(in) = ADP + phosphate + 5 H(+)(out). Functionally, probable catalytic subunit of a protein translocase for flagellum-specific export, or a proton translocase involved in local circuits at the flagellum. The polypeptide is Flagellum-specific ATP synthase (fliI) (Helicobacter pylori (strain J99 / ATCC 700824) (Campylobacter pylori J99)).